The sequence spans 451 residues: Tubulin alpha-1 chain (451 aa).

Q11 provides a ligand contact to GTP. K40 carries the N6-acetyllysine modification. E71, G144, T145, T179, N206, and N228 together coordinate GTP. Residue E71 coordinates Mg(2+). E254 is an active-site residue.

This sequence belongs to the tubulin family. In terms of assembly, dimer of alpha and beta chains. A typical microtubule is a hollow water-filled tube with an outer diameter of 25 nm and an inner diameter of 15 nM. Alpha-beta heterodimers associate head-to-tail to form protofilaments running lengthwise along the microtubule wall with the beta-tubulin subunit facing the microtubule plus end conferring a structural polarity. Microtubules usually have 13 protofilaments but different protofilament numbers can be found in some organisms and specialized cells. Mg(2+) serves as cofactor. Undergoes a tyrosination/detyrosination cycle, the cyclic removal and re-addition of a C-terminal tyrosine residue by the enzymes tubulin tyrosine carboxypeptidase (TTCP) and tubulin tyrosine ligase (TTL), respectively. Post-translationally, acetylation of alpha chains at Lys-40 stabilizes microtubules and affects affinity and processivity of microtubule motors. This modification has a role in multiple cellular functions, ranging from cell motility, cell cycle progression or cell differentiation to intracellular trafficking and signaling.

It localises to the cytoplasm. Its subcellular location is the cytoskeleton. The catalysed reaction is GTP + H2O = GDP + phosphate + H(+). Its function is as follows. Tubulin is the major constituent of microtubules, a cylinder consisting of laterally associated linear protofilaments composed of alpha- and beta-tubulin heterodimers. Microtubules grow by the addition of GTP-tubulin dimers to the microtubule end, where a stabilizing cap forms. Below the cap, tubulin dimers are in GDP-bound state, owing to GTPase activity of alpha-tubulin. This is Tubulin alpha-1 chain (TUBA1) from Chlamydomonas reinhardtii (Chlamydomonas smithii).